A 272-amino-acid polypeptide reads, in one-letter code: Undecaprenyl-diphosphatase (272 aa).

Transmembrane regions (helical) follow at residues 2–22 (LELIKAIFLGIVEGITEWLPI), 50–70 (VIQLGAIMAVVVLYWNKLFPF), 83–103 (FSLWIKVLAATLPAALIGVPF), 110–130 (LFYNYITVAITLIVYGVLFII), 148–168 (LGYKAVLLIGAFQVLALIPGT), 195–215 (LAIPVMFGASLLKLVKFGFAF), 220–240 (LIILLTGMIVAFAVSIFAIKF), and 250–270 (FKAFGYYRIILGLIVVLYFLA).

Belongs to the UppP family.

The protein localises to the cell membrane. The enzyme catalyses di-trans,octa-cis-undecaprenyl diphosphate + H2O = di-trans,octa-cis-undecaprenyl phosphate + phosphate + H(+). Catalyzes the dephosphorylation of undecaprenyl diphosphate (UPP). Confers resistance to bacitracin. This Acetivibrio thermocellus (strain ATCC 27405 / DSM 1237 / JCM 9322 / NBRC 103400 / NCIMB 10682 / NRRL B-4536 / VPI 7372) (Clostridium thermocellum) protein is Undecaprenyl-diphosphatase.